Here is a 135-residue protein sequence, read N- to C-terminus: Germinal center-associated signaling and motility-like protein (135 aa).

The disordered stretch occupies residues 1-68; the sequence is MGNYLLRKLS…ENGSGSEEVC (68 aa). Over residues 22 to 48 the composition is skewed to basic and acidic residues; the sequence is GNPDEERKRQEMTTFERKLQDQDKKSQ. Residues 26–50 adopt a coiled-coil conformation; sequence EERKRQEMTTFERKLQDQDKKSQEV. The span at 51–66 shows a compositional bias: low complexity; the sequence is SSTSNQENENGSGSEE.

This is Germinal center-associated signaling and motility-like protein (GCSAML) from Homo sapiens (Human).